A 213-amino-acid chain; its full sequence is Lactobacillus shifted protein (213 aa).

A compositionally biased stretch (polar residues) spans Pro28 to Asn38. Disordered stretches follow at residues Pro28 to Pro56 and Pro182 to Arg213.

The polypeptide is Lactobacillus shifted protein (lbsA) (Emericella nidulans (strain FGSC A4 / ATCC 38163 / CBS 112.46 / NRRL 194 / M139) (Aspergillus nidulans)).